The primary structure comprises 259 residues: Type III pantothenate kinase (259 aa).

An ATP-binding site is contributed by 6-13 (DAGNTNIV). Residues tyrosine 100 and 107–110 (GADR) each bind substrate. The active-site Proton acceptor is the aspartate 109. Aspartate 129 is a K(+) binding site. Threonine 132 contributes to the ATP binding site. Residue threonine 184 participates in substrate binding.

It belongs to the type III pantothenate kinase family. As to quaternary structure, homodimer. NH4(+) serves as cofactor. It depends on K(+) as a cofactor.

It localises to the cytoplasm. The enzyme catalyses (R)-pantothenate + ATP = (R)-4'-phosphopantothenate + ADP + H(+). It functions in the pathway cofactor biosynthesis; coenzyme A biosynthesis; CoA from (R)-pantothenate: step 1/5. Functionally, catalyzes the phosphorylation of pantothenate (Pan), the first step in CoA biosynthesis. The chain is Type III pantothenate kinase from Clostridium novyi (strain NT).